We begin with the raw amino-acid sequence, 317 residues long: 3-oxoacyl-[acyl-carrier-protein] reductase 5, chloroplastic (317 aa).

The N-terminal 57 residues, 1-57 (TTVAATKLTSLKATAGKLGYREICQVRQWAPLKSAMPHFGMLRCATSTVVKAQAQAQ), are a transit peptide targeting the chloroplast. 79–103 (VTGASRGIGKAIALSLGKAGCKVLV) is an NADP(+) binding site. Ser-211 provides a ligand contact to substrate. The active-site Proton acceptor is the Tyr-224.

Belongs to the short-chain dehydrogenases/reductases (SDR) family. As to quaternary structure, homotetramer.

It is found in the plastid. The protein resides in the chloroplast. The enzyme catalyses a (3R)-hydroxyacyl-[ACP] + NADP(+) = a 3-oxoacyl-[ACP] + NADPH + H(+). It participates in lipid metabolism; fatty acid biosynthesis. The sequence is that of 3-oxoacyl-[acyl-carrier-protein] reductase 5, chloroplastic (bkr1) from Brassica napus (Rape).